The primary structure comprises 100 residues: Small ribosomal subunit protein uS14 (100 aa).

This sequence belongs to the universal ribosomal protein uS14 family. Part of the 30S ribosomal subunit. Contacts proteins S3 and S10.

In terms of biological role, binds 16S rRNA, required for the assembly of 30S particles and may also be responsible for determining the conformation of the 16S rRNA at the A site. The chain is Small ribosomal subunit protein uS14 from Prochlorococcus marinus (strain AS9601).